Consider the following 146-residue polypeptide: VQLSGEEKAAVLALWDKVNEEEVGGEALGRLLVVYPWTQRFFDSFGDLSNPAAVMGNPKVKAHGKKVLHSFGEGVHHLDNLKGTFAQLSELHCDKLHVDPENFRLLGNVLVVVLARHFGKDFTPELQASYQKVVAGVANALAHKYH.

Residue Val1 is modified to N-acetylvaline. The region spanning 2–146 (QLSGEEKAAV…VANALAHKYH (145 aa)) is the Globin domain. Ser44 is modified (phosphoserine). Residue Lys59 is modified to N6-acetyllysine. His63 contacts heme b. Residue Lys82 is modified to N6-acetyllysine. His92 serves as a coordination point for heme b. Cys93 is subject to S-nitrosocysteine. Position 144 is an N6-acetyllysine (Lys144).

The protein belongs to the globin family. In terms of assembly, heterotetramer of two alpha chains and two beta chains. As to expression, red blood cells.

Its function is as follows. Involved in oxygen transport from the lung to the various peripheral tissues. This chain is Hemoglobin subunit beta (HBB), found in Equus hemionus kulan (Turkmenian kulan).